The primary structure comprises 366 residues: Chorismate synthase (366 aa).

NADP(+) is bound by residues arginine 47 and arginine 53. Residues 124-126 (RSS), glycine 286, 301-305 (KPTAT), and arginine 327 contribute to the FMN site.

The protein belongs to the chorismate synthase family. Homotetramer. FMNH2 is required as a cofactor.

The catalysed reaction is 5-O-(1-carboxyvinyl)-3-phosphoshikimate = chorismate + phosphate. It functions in the pathway metabolic intermediate biosynthesis; chorismate biosynthesis; chorismate from D-erythrose 4-phosphate and phosphoenolpyruvate: step 7/7. Functionally, catalyzes the anti-1,4-elimination of the C-3 phosphate and the C-6 proR hydrogen from 5-enolpyruvylshikimate-3-phosphate (EPSP) to yield chorismate, which is the branch point compound that serves as the starting substrate for the three terminal pathways of aromatic amino acid biosynthesis. This reaction introduces a second double bond into the aromatic ring system. The chain is Chorismate synthase from Microcystis aeruginosa (strain NIES-843 / IAM M-2473).